The chain runs to 135 residues: UPF0299 membrane protein YE2790 (135 aa).

4 consecutive transmembrane segments (helical) span residues 4 to 24 (VTSL…CLWA), 30 to 50 (LLLP…FALL), 63 to 83 (GCHL…VGVM), and 93 to 113 (FGPI…VVGY).

Belongs to the UPF0299 family.

The protein localises to the cell inner membrane. The chain is UPF0299 membrane protein YE2790 from Yersinia enterocolitica serotype O:8 / biotype 1B (strain NCTC 13174 / 8081).